The chain runs to 395 residues: Acetate kinase (395 aa).

Asparagine 8 contributes to the Mg(2+) binding site. Lysine 15 serves as a coordination point for ATP. Arginine 89 contacts substrate. The active-site Proton donor/acceptor is aspartate 146. ATP is bound by residues 206–210 (HLGNG), 281–283 (DLR), and 329–333 (GIGEN). Residue glutamate 382 participates in Mg(2+) binding.

It belongs to the acetokinase family. As to quaternary structure, homodimer. The cofactor is Mg(2+). Mn(2+) serves as cofactor.

The protein localises to the cytoplasm. It carries out the reaction acetate + ATP = acetyl phosphate + ADP. The protein operates within metabolic intermediate biosynthesis; acetyl-CoA biosynthesis; acetyl-CoA from acetate: step 1/2. With respect to regulation, induced by glucose excess, the induction may be mediated by CcpA transcriptional regulator. Functionally, catalyzes the formation of acetyl phosphate from acetate and ATP. Can also catalyze the reverse reaction. Appears to favor the formation of acetate. Involved in the secretion of excess carbohydrate. This chain is Acetate kinase, found in Bacillus subtilis (strain 168).